Reading from the N-terminus, the 365-residue chain is 3-dehydroquinate synthase (365 aa).

NAD(+) is bound by residues 69-74, 103-107, 127-128, Lys140, and Lys149; these read DGEAHK, GVIGD, and TT. Zn(2+)-binding residues include Glu182, His245, and His262.

It belongs to the sugar phosphate cyclases superfamily. Dehydroquinate synthase family. Requires Co(2+) as cofactor. Zn(2+) serves as cofactor. NAD(+) is required as a cofactor.

The protein resides in the cytoplasm. It catalyses the reaction 7-phospho-2-dehydro-3-deoxy-D-arabino-heptonate = 3-dehydroquinate + phosphate. Its pathway is metabolic intermediate biosynthesis; chorismate biosynthesis; chorismate from D-erythrose 4-phosphate and phosphoenolpyruvate: step 2/7. Functionally, catalyzes the conversion of 3-deoxy-D-arabino-heptulosonate 7-phosphate (DAHP) to dehydroquinate (DHQ). In Pseudomonas putida (strain ATCC 700007 / DSM 6899 / JCM 31910 / BCRC 17059 / LMG 24140 / F1), this protein is 3-dehydroquinate synthase.